The following is a 1910-amino-acid chain: C2 domain-containing protein (1910 aa).

Positions 1–28 (MMKLKEMVEAAEAKVESKPPQAAEEKAP) are enriched in basic and acidic residues. Disordered regions lie at residues 1–54 (MMKL…EPLD), 355–377 (AMKL…PEDG), and 398–428 (LEEL…DGPQ). The span at 414-423 (KGEDKKDGNK) shows a compositional bias: basic and acidic residues. In terms of domain architecture, C2 spans 557-678 (QLGEVSESDS…FFNEKHNKRN (122 aa)). Basic and acidic residues-rich tracts occupy residues 1192–1205 (LAQK…DAQR) and 1215–1228 (GHEG…DKQG). Disordered stretches follow at residues 1192 to 1267 (LAQK…VKKG), 1405 to 1424 (ATAG…RDMQ), 1431 to 1654 (LEEA…SMGA), 1666 to 1747 (QRKH…FLSS), 1822 to 1841 (AKEE…DWSD), and 1879 to 1910 (DACS…AGRT). Composition is skewed to low complexity over residues 1239–1257 (AAAA…VQGA) and 1405–1414 (ATAGEGEQQT). The span at 1440–1469 (KKKKKKEKKEKKEKKEKKEKKEKKEKKKKK) shows a compositional bias: basic residues. The segment covering 1492-1502 (PAAAIPSVLLP) has biased composition (low complexity). Residues 1517-1526 (KKEKKEKKKK) are compositionally biased toward basic residues. Over residues 1550–1561 (PAAAIPSILLPA) the composition is skewed to low complexity. Over residues 1569 to 1584 (EKPKEKKTEKKKEKHT) the composition is skewed to basic and acidic residues. Positions 1595–1604 (LPESETTAVV) are enriched in polar residues. Composition is skewed to low complexity over residues 1620–1629 (VPSSIASSEA) and 1675–1698 (SSSS…SSSS). Positions 1701-1711 (AETRAKADALR) are enriched in basic and acidic residues. Composition is skewed to low complexity over residues 1712 to 1722 (ARLQAAQARLA) and 1729 to 1747 (VSSS…FLSS). Positions 1766 to 1828 (QQRLQKMVSG…TRRAKEEKDL (63 aa)) form a coiled coil. Positions 1890–1904 (ESRTTAGAKLRQQQL) are enriched in polar residues.

It is found in the membrane. Functionally, regulates microneme secretion. Probably involved in regulation of rhoptry and dense granule secretion. The sequence is that of C2 domain-containing protein from Toxoplasma gondii.